The sequence spans 175 residues: Bacterial proteasome activator (175 aa).

Residues 152 to 175 (LPPGIQVPGAQRGGATHPGTGQYL) form a disordered region. The HbYX motif motif lies at 173–175 (QYL).

Belongs to the Bpa family. Forms a homooligomeric, either hexameric or heptameric, ring-like structure which stacks co-axially with the proteasomal alpha-rings.

Interacts with the core proteasome alpha-subunit (PrcA) through its C-terminal hydrophobic-tyrosine-X motif (HbYX motif). Interaction of Bpa with the proteasome stimulates proteasomal peptidase and casein degradation activity, which suggests Bpa could play a role in the removal of non-native or damaged proteins by influencing the conformation of the proteasome complex upon interaction. This Mycolicibacterium smegmatis (strain ATCC 700084 / mc(2)155) (Mycobacterium smegmatis) protein is Bacterial proteasome activator.